The chain runs to 368 residues: tRNA-specific 2-thiouridylase MnmA (368 aa).

ATP is bound by residues 11–18 (GMSGGVDS) and M37. The interaction with target base in tRNA stretch occupies residues 97-99 (NPD). Residue C102 is the Nucleophile of the active site. A disulfide bond links C102 and C199. Position 127 (G127) interacts with ATP. An interaction with tRNA region spans residues 149–151 (KDQ). C199 acts as the Cysteine persulfide intermediate in catalysis. The interval 311–312 (RY) is interaction with tRNA.

The protein belongs to the MnmA/TRMU family. As to quaternary structure, interacts with TusE.

Its subcellular location is the cytoplasm. It catalyses the reaction S-sulfanyl-L-cysteinyl-[protein] + uridine(34) in tRNA + AH2 + ATP = 2-thiouridine(34) in tRNA + L-cysteinyl-[protein] + A + AMP + diphosphate + H(+). Its function is as follows. Catalyzes the 2-thiolation of uridine at the wobble position (U34) of tRNA(Lys), tRNA(Glu) and tRNA(Gln), leading to the formation of s(2)U34, the first step of tRNA-mnm(5)s(2)U34 synthesis. Sulfur is provided by IscS, via a sulfur-relay system. Binds ATP and its substrate tRNAs. The polypeptide is tRNA-specific 2-thiouridylase MnmA (Escherichia coli O1:K1 / APEC).